The chain runs to 422 residues: Biofilm regulator 1 (422 aa).

2 stretches are compositionally biased toward low complexity: residues 1–19 (MSSSSSLSSSTTTATTTSA) and 36–45 (SGGSNNGNGS). Disordered stretches follow at residues 1–86 (MSSS…KCPP) and 116–207 (RLSS…PSHP). Positions 46–61 (ALKSQISPRLSDTSRI) are enriched in polar residues. Composition is skewed to low complexity over residues 69 to 81 (TSGSSTPTSSSTP) and 120 to 143 (PTLPVKVQPQQQPQLPPASSLSPV). Positions 146-159 (VINTPPQQPQSVSA) are enriched in polar residues. The span at 160–194 (STSPNTQYQYYQYQQQSSPIQQQQQQQQATPAATP) shows a compositional bias: low complexity. Positions 195-205 (TVMQMAQNQPS) are enriched in polar residues. The GATA-type zinc-finger motif lies at 282–307 (CHRCGTTETPEWRRGPKGVRTLCNAC).

Interacts with HDA1.

It is found in the nucleus. Its function is as follows. Transcription factor required for hyphal growth, biofilm formation, and virulence. Promotes formation of both conventional and pheromone-stimulated biofilms. Binds and recruits HDA1 to promoters of hypha-specific genes in a rapamycin-dependent manner. Involved in the switch between two heritable states, the white and opaque states. These two cell types differ in many characteristics, including cell structure, mating competence, and virulence. Each state is heritable for many generations, and switching between states occurs stochastically at low frequency. This is Biofilm regulator 1 (BRG1) from Candida albicans (strain SC5314 / ATCC MYA-2876) (Yeast).